The following is a 259-amino-acid chain: Phosphatidylglycerol--prolipoprotein diacylglyceryl transferase (259 aa).

4 helical membrane-spanning segments follow: residues I9–V29, I47–I67, I83–I103, and V109–I129. R131 contacts a 1,2-diacyl-sn-glycero-3-phospho-(1'-sn-glycerol). 3 helical membrane passes run M167 to L187, L194 to I214, and L227 to L247.

Belongs to the Lgt family.

Its subcellular location is the cell membrane. It carries out the reaction L-cysteinyl-[prolipoprotein] + a 1,2-diacyl-sn-glycero-3-phospho-(1'-sn-glycerol) = an S-1,2-diacyl-sn-glyceryl-L-cysteinyl-[prolipoprotein] + sn-glycerol 1-phosphate + H(+). Its pathway is protein modification; lipoprotein biosynthesis (diacylglyceryl transfer). Its function is as follows. Catalyzes the transfer of the diacylglyceryl group from phosphatidylglycerol to the sulfhydryl group of the N-terminal cysteine of a prolipoprotein, the first step in the formation of mature lipoproteins. In Streptococcus uberis (strain ATCC BAA-854 / 0140J), this protein is Phosphatidylglycerol--prolipoprotein diacylglyceryl transferase.